A 318-amino-acid polypeptide reads, in one-letter code: Oxidoreductase swnN (318 aa).

The protein belongs to the NmrA-type oxidoreductase family. Isoflavone reductase subfamily.

The protein operates within mycotoxin biosynthesis. Functionally, aminotransferase; part of the gene cluster that mediates the biosynthesis of swainsonine (SW), a cytotoxic fungal alkaloid and a potential cancer therapy drug. Swainsonine production occurs via a multibranched pathway and is dispensable for fungal colonization of plants and infection of insect hosts. The first step of swainsonine biosynthesis is the production of the precursor pipecolic acid (PA) via conversion of L-lysine (Lys) to 1-piperideine-6-carboxylate (P6C) by the aminotransferase swnA, the latter being further reduced to PA by the reductase swnR. The PKS-NRPS hybrid synthetase swnK uptakes and condensates PA and malonyl-CoA with and without skipping of the ketoreductase (KR) domain in order to produce 3 intermediates, 1-oxoindolizidine, (1S)-1-hydroxyindolizin, and (1R)-1-hydroxyindolizine; with the transisomer (1S)-1-hydroxyindolizin being predominant. The terminal thioester reductase (TE) domain of swnK is involved in reduction of the thioester bond to release the intermediate aldehydes. The oxidoreductase swnN could contribute to the reduction of 1-oxoindolizidine to (1S)-1-hydroxyindolizin and (1R)-1-hydroxyindolizine, contributing to the major route of SW production. The dioxygenase swnH2 would be responsible for the oxidization of (1R)-1-hydroxyindolizine into (1R,2S)-1,2-dihydroxyindolizine and of (1S)-1-hydroxyindolizin to yield both (1R,2S)-1,2-dihydroxyindolizine and (1S,2S)-1,2-dihydroxyindolizine. The dioxygenase swnH1 then performs the conversion of the 1,2-dihydroxyindolizine epimers to SW. This Arthroderma benhamiae (strain ATCC MYA-4681 / CBS 112371) (Trichophyton mentagrophytes) protein is Oxidoreductase swnN.